A 160-amino-acid chain; its full sequence is MPLELDLQVASDAADLPSEAQFRAWCELALRQRAESELTIRLVDEAEGLELNSTYRHKDYATNVLSFPADVPEEFLDIPLLGDLVICAPVVAREAREQHKPLQAHWAHLVIHGCLHLLGYDHIDDAEAEEMETLERELLAELGHPDPYACDDEEPPSKEK.

His-112, His-116, and His-122 together coordinate Zn(2+). Positions 141–160 (ELGHPDPYACDDEEPPSKEK) are disordered.

This sequence belongs to the endoribonuclease YbeY family. Requires Zn(2+) as cofactor.

It localises to the cytoplasm. In terms of biological role, single strand-specific metallo-endoribonuclease involved in late-stage 70S ribosome quality control and in maturation of the 3' terminus of the 16S rRNA. The polypeptide is Endoribonuclease YbeY (Pseudomonas paraeruginosa (strain DSM 24068 / PA7) (Pseudomonas aeruginosa (strain PA7))).